The sequence spans 472 residues: Siroheme synthase (472 aa).

The precorrin-2 dehydrogenase /sirohydrochlorin ferrochelatase stretch occupies residues 1-203 (MNYLPIFIDI…GKIQEAKADL (203 aa)). Residues 22 to 23 (DI) and 43 to 44 (KS) contribute to the NAD(+) site. Serine 128 carries the post-translational modification Phosphoserine. A uroporphyrinogen-III C-methyltransferase region spans residues 216-472 (GEVYLVGGGP…SSKKSYLFGG (257 aa)). Proline 225 serves as a coordination point for S-adenosyl-L-methionine. The active-site Proton acceptor is the aspartate 248. The Proton donor role is filled by lysine 270. S-adenosyl-L-methionine is bound by residues 301-303 (GGD), isoleucine 306, 331-332 (TA), methionine 383, and glycine 412.

This sequence in the N-terminal section; belongs to the precorrin-2 dehydrogenase / sirohydrochlorin ferrochelatase family. In the C-terminal section; belongs to the precorrin methyltransferase family.

The enzyme catalyses uroporphyrinogen III + 2 S-adenosyl-L-methionine = precorrin-2 + 2 S-adenosyl-L-homocysteine + H(+). It catalyses the reaction precorrin-2 + NAD(+) = sirohydrochlorin + NADH + 2 H(+). The catalysed reaction is siroheme + 2 H(+) = sirohydrochlorin + Fe(2+). The protein operates within cofactor biosynthesis; adenosylcobalamin biosynthesis; precorrin-2 from uroporphyrinogen III: step 1/1. It functions in the pathway cofactor biosynthesis; adenosylcobalamin biosynthesis; sirohydrochlorin from precorrin-2: step 1/1. Its pathway is porphyrin-containing compound metabolism; siroheme biosynthesis; precorrin-2 from uroporphyrinogen III: step 1/1. It participates in porphyrin-containing compound metabolism; siroheme biosynthesis; siroheme from sirohydrochlorin: step 1/1. The protein operates within porphyrin-containing compound metabolism; siroheme biosynthesis; sirohydrochlorin from precorrin-2: step 1/1. Multifunctional enzyme that catalyzes the SAM-dependent methylations of uroporphyrinogen III at position C-2 and C-7 to form precorrin-2 via precorrin-1. Then it catalyzes the NAD-dependent ring dehydrogenation of precorrin-2 to yield sirohydrochlorin. Finally, it catalyzes the ferrochelation of sirohydrochlorin to yield siroheme. The chain is Siroheme synthase from Ruthia magnifica subsp. Calyptogena magnifica.